Consider the following 316-residue polypeptide: tRNA methyltransferase 10 homolog B (316 aa).

Disordered stretches follow at residues 1 to 30 and 42 to 98; these read MDCEWEGRPQRAGSRASQDPEGLPEARDDG and VEYD…DLGN. Residues 63-82 show a composition bias toward basic residues; sequence VQRKQRHWERIVSSKKSKRK. Residues 75–96 are a coiled coil; that stretch reads SSKKSKRKQERERRKIKRAEDL. Over residues 83 to 95 the composition is skewed to basic and acidic residues; sequence QERERRKIKRAED. One can recognise an SAM-dependent MTase TRM10-type domain in the interval 113 to 310; it reads TKEKLLEAKH…KGVSPGKGYI (198 aa).

This sequence belongs to the class IV-like SAM-binding methyltransferase superfamily. TRM10 family.

It carries out the reaction guanosine(9) in tRNA + S-adenosyl-L-methionine = N(1)-methylguanosine(9) in tRNA + S-adenosyl-L-homocysteine + H(+). S-adenosyl-L-methionine-dependent guanine N(1)-methyltransferase that catalyzes the formation of N(1)-methylguanine at position 9 (m1G9) in tRNAs. Probably not able to catalyze formation of N(1)-methyladenine at position 9 (m1A9) in tRNAs. This Rattus norvegicus (Rat) protein is tRNA methyltransferase 10 homolog B (Trmt10b).